The primary structure comprises 258 residues: MDQTSSSTQILVSLMENAQPDPTAGQPVAQVILDNFCLSSMYSPDVLRNPRAQHTIKTAVFQWIDEHHRKMYDCPIEPPLRFTDDAHLSADRCWHHLIGKLERVVSVLRAMRAMSRFEHNVFVFLPYCKRLRALVELFRHDYCCQSTVAGCARALDETIADAQRHLLVVRSMSERAAVMLVFSDWVRVYQCNICEDSSAEEQFLKPNVCCGYRVCNACYAKLWEFCTGAYPVCPICKTGFKSSSSNKRLQKADDPATL.

Residues 191–237 (CNICEDSSAEEQFLKPNVCCGYRVCNACYAKLWEFCTGAYPVCPICK) form an RING-type zinc finger.

The sequence is that of Immediate-early protein IE-0 (IE-0) from Lymantria dispar multicapsid nuclear polyhedrosis virus (LdMNPV).